The sequence spans 860 residues: JmjC domain-containing histone demethylation protein 1 (860 aa).

3 disordered regions span residues 1-45 (MSEQ…EEGK), 117-212 (STSP…PKRK), and 408-440 (DVKE…GGEI). The PHD-type zinc-finger motif lies at 23–116 (PEPCPLCRET…KWYCAPCLAR (94 aa)). Composition is skewed to basic and acidic residues over residues 183–192 (IDMKSEREQQ) and 408–433 (DVKE…HLTE). The JmjC domain occupies 416–579 (NDSREGSEIR…TQLRLRQIEI (164 aa)). Thr-471 is a binding site for substrate. Fe cation contacts are provided by His-474 and Asp-476. Lys-491 is a substrate binding site. Residue His-547 participates in Fe cation binding. Disordered regions lie at residues 744–795 (HPPA…ANEN) and 837–860 (GPKL…DIDH). Positions 750–763 (ENRQSPQIETTTVQ) are enriched in polar residues. Over residues 767–795 (PSTSSSDAISGSGPGASPGASANGGANEN) the composition is skewed to low complexity.

The protein belongs to the JHDM1 histone demethylase family. Fe(2+) serves as cofactor.

The protein localises to the nucleus. It catalyses the reaction N(6),N(6)-dimethyl-L-lysyl(36)-[histone H3] + 2 2-oxoglutarate + 2 O2 = L-lysyl(36)-[histone H3] + 2 formaldehyde + 2 succinate + 2 CO2. Functionally, histone demethylase that specifically demethylates 'Lys-36' of histone H3, thereby playing a central role in histone code. The sequence is that of JmjC domain-containing histone demethylation protein 1 (JHD1) from Cryptococcus neoformans var. neoformans serotype D (strain JEC21 / ATCC MYA-565) (Filobasidiella neoformans).